Consider the following 618-residue polypeptide: Polyamine transporter TPO5 (618 aa).

The Cytoplasmic segment spans residues 1–60; sequence MPEYTLLADNIRENIVHFDPNGLFDNLHTIVHEDDSQENEEAEHFNYDQVLDKSLLSRGS. Residues 61–84 traverse the membrane as a helical segment; that stretch reads IVGLGLGLMSPVLGMCTSMAIGLI. The Extracellular segment spans residues 85-90; the sequence is NGGPLT. A helical transmembrane segment spans residues 91 to 110; that stretch reads IMLGFLISGVCIWFSSLSLG. At 111 to 131 the chain is on the cytoplasmic side; that stretch reads EIVSKFPMELHVGSAMLAPEK. The helical transmembrane segment at 132–148 threads the bilayer; that stretch reads LKLVCSWYTGWLMLIGN. The Extracellular segment spans residues 149–154; the sequence is WTMSTS. The chain crosses the membrane as a helical span at residues 155–171; that stretch reads ITFAGAQLTISLILMTN. At 172–179 the chain is on the cytoplasmic side; the sequence is SNLISEAH. A helical membrane pass occupies residues 180 to 200; the sequence is LIFYTVIVFYLVVTVVGLVNL. The Extracellular segment spans residues 201 to 211; it reads KFARFIETINK. The helical transmembrane segment at 212–231 threads the bilayer; that stretch reads VCVYWIIYAIIFIDILLLVF. Topologically, residues 232 to 297 are cytoplasmic; sequence HKGKFRSLKY…EKDIPRGMSN (66 aa). The chain crosses the membrane as a helical span at residues 298-317; that stretch reads AVLLSAFSGVIFLIPIMLIL. Topologically, residues 318 to 342 are extracellular; sequence PDNDLLFTNHKVLPIVNIFTKSTDS. Residues 343-367 form a helical membrane-spanning segment; that stretch reads VVLSFFLVLLILGNLLFSGIGSITT. The Cytoplasmic segment spans residues 368 to 402; it reads SSRAVYSFSRDQAIPYYDKWTYVEPDSQSKVPKNS. The chain crosses the membrane as a helical span at residues 403-419; that stretch reads VVLSMIISYFLGLLALI. Residues 420-425 lie on the Extracellular side of the membrane; it reads STAAFN. The chain crosses the membrane as a helical span at residues 426-449; the sequence is AFIGAAVLCLCSATFIPLVLVLFT. At 450–464 the chain is on the cytoplasmic side; sequence RRRAIRSAPVKIRYK. A helical transmembrane segment spans residues 465-486; the sequence is FGWFINIVSIVWLLLSMVSVCL. The Extracellular portion of the chain corresponds to 487-498; the sequence is PTQVPVTFKTMN. The helical transmembrane segment at 499–516 threads the bilayer; it reads YALMVYVFCILVITGLYF. Residues 517–618 lie on the Cytoplasmic side of the membrane; that stretch reads KWGKYNFRLP…DLADDRRYDI (102 aa). Ser569 is modified (phosphoserine). Residues 576–618 are disordered; that stretch reads VHPKSSTENPFEENEENVITDYGDEHHTAEQEFDLADDRRYDI. A compositionally biased stretch (basic and acidic residues) spans 598-618; it reads GDEHHTAEQEFDLADDRRYDI.

It belongs to the amino acid-polyamine-organocation (APC) superfamily.

Its subcellular location is the golgi apparatus membrane. Required for polyamine transport. Transports putrescine effectively and spermidine less effectively. The chain is Polyamine transporter TPO5 (TPO5) from Saccharomyces cerevisiae (strain ATCC 204508 / S288c) (Baker's yeast).